The primary structure comprises 170 residues: Shikimate kinase (170 aa).

11–16 (LSGKST) serves as a coordination point for ATP. Ser-15 is a Mg(2+) binding site. Positions 33, 57, and 79 each coordinate substrate. Arg-119 contributes to the ATP binding site. Residue Arg-137 coordinates substrate.

This sequence belongs to the shikimate kinase family. In terms of assembly, monomer. Requires Mg(2+) as cofactor.

The protein resides in the cytoplasm. The catalysed reaction is shikimate + ATP = 3-phosphoshikimate + ADP + H(+). Its pathway is metabolic intermediate biosynthesis; chorismate biosynthesis; chorismate from D-erythrose 4-phosphate and phosphoenolpyruvate: step 5/7. In terms of biological role, catalyzes the specific phosphorylation of the 3-hydroxyl group of shikimic acid using ATP as a cosubstrate. The protein is Shikimate kinase of Clostridium botulinum (strain Langeland / NCTC 10281 / Type F).